The following is a 92-amino-acid chain: Small ribosomal subunit protein uS19c (92 aa).

This sequence belongs to the universal ribosomal protein uS19 family.

It is found in the plastid. Its subcellular location is the chloroplast. In terms of biological role, protein S19 forms a complex with S13 that binds strongly to the 16S ribosomal RNA. The polypeptide is Small ribosomal subunit protein uS19c (rps19) (Porphyra purpurea (Red seaweed)).